A 92-amino-acid chain; its full sequence is Small ribosomal subunit protein uS19 (92 aa).

This sequence belongs to the universal ribosomal protein uS19 family.

Protein S19 forms a complex with S13 that binds strongly to the 16S ribosomal RNA. The protein is Small ribosomal subunit protein uS19 of Gloeobacter violaceus (strain ATCC 29082 / PCC 7421).